Reading from the N-terminus, the 477-residue chain is Probable cytosolic Fe-S cluster assembly factor GM20417 (477 aa).

Residues C23, C68, C71, C74, C187, C243, C395, and C399 each coordinate [4Fe-4S] cluster.

It belongs to the NARF family.

Its function is as follows. Component of the cytosolic iron-sulfur (Fe/S) protein assembly machinery. Required for maturation of extramitochondrial Fe/S proteins. This is Probable cytosolic Fe-S cluster assembly factor GM20417 from Drosophila sechellia (Fruit fly).